The primary structure comprises 289 residues: Aquaporin PIP1-2 (289 aa).

The segment at 1–36 (MEGKEEDVRLGANKFSERQPIGTAAQGAADDKDYKE) is disordered. Transmembrane regions (helical) follow at residues 58-78 (IAEF…VMGV) and 93-115 (IAWS…SGGH). The NPA 1 motif lies at 117–119 (NPA). Helical transmembrane passes span 136–156 (LFYI…VKGF), 178–198 (GDGL…VFSA), and 212–232 (ILAP…TIPI). Positions 238–240 (NPA) match the NPA 2 motif. Residues 260–280 (IFWVGPFIGAALAAIYHQVII) form a helical membrane-spanning segment.

Belongs to the MIP/aquaporin (TC 1.A.8) family. PIP (TC 1.A.8.11) subfamily. In terms of assembly, interacts with PIP2-1 to form heteromers. In terms of tissue distribution, highly expressed in developing tassels and at lower levels in roots, shoots, ears and embryos. Expressed in the root growing zone at 5-6 mm from the root tip. Expressed in xylem parenchyma.

Its subcellular location is the cell membrane. Water channel required to facilitate the transport of water across cell membrane. Active as heteromers with PIP1-1, PIP2-1, PIP2-4 or PIP2-5, but not as homomers. This Zea mays (Maize) protein is Aquaporin PIP1-2 (PIP1-2).